The sequence spans 486 residues: ATP synthase subunit beta (486 aa).

An ATP-binding site is contributed by Gly164–Thr171.

It belongs to the ATPase alpha/beta chains family. In terms of assembly, F-type ATPases have 2 components, CF(1) - the catalytic core - and CF(0) - the membrane proton channel. CF(1) has five subunits: alpha(3), beta(3), gamma(1), delta(1), epsilon(1). CF(0) has four main subunits: a(1), b(1), b'(1) and c(9-12).

It localises to the cellular thylakoid membrane. The catalysed reaction is ATP + H2O + 4 H(+)(in) = ADP + phosphate + 5 H(+)(out). In terms of biological role, produces ATP from ADP in the presence of a proton gradient across the membrane. The catalytic sites are hosted primarily by the beta subunits. This Prochlorococcus marinus (strain MIT 9312) protein is ATP synthase subunit beta.